The primary structure comprises 213 residues: RNA polymerase I subunit H (213 aa).

Basic and acidic residues predominate over residues 1–19 (MVERMKKDTGDETKTKVQE). The disordered stretch occupies residues 1–70 (MVERMKKDTG…AREFTDKPWR (70 aa)). The segment covering 21–31 (PPSPSPPPPPP) has biased composition (pro residues). Basic and acidic residues-rich tracts occupy residues 43-53 (VPEREKKQIER) and 60-69 (HAREFTDKPW).

As to expression, expressed during spermatogenesis, initially at pachytene stage with abundance increasing in round spermatids and decreasing again during spermatid elongation.

In terms of biological role, may be involved in male sterility. This Mus musculus (Mouse) protein is RNA polymerase I subunit H.